Here is a 236-residue protein sequence, read N- to C-terminus: DCN1-like protein 5 (236 aa).

Residues serine 9, serine 40, and serine 47 each carry the phosphoserine modification. Residues 45–231 (FSSKKCLAWF…LLDEFVEWHK (187 aa)) form the DCUN1 domain.

As to quaternary structure, part of a complex that contains DCUN1D5, CUL1 and RBX1; this interaction is bridged by CUL1. Interacts (via the DCUN1 domain) with the unneddylated cullins: interacts with CUL1, CUL2, CUL3, CUL4A, CUL4B and CUL5; these interactions promote the cullin neddylation and the identity of the cullin dictates the affinity of the interaction. Interacts (via DCUN1 domain) with UBE2M (N-terminally acetylated form) and probably with UBE2F (N-terminally acetylated form). May also interact with regulators or subunits of cullin-RING ligases such as RBX1, RNF7, ELOB and DDB1; these interactions are bridged by cullins. Interacts with CAND1; this interaction is bridged by cullins and strongly inhibits the neddylation of cullins. These CAND-cullin-DCNL complexes can only be neddylated in the presence of a substrate adapter. Phosphorylation at Ser-40 is independent of cullin's interaction. Phosphorylated in response to both TICAM1 and MYD88 dependent Toll-like receptor (TLR) pathway activation. Phosphorylated in response to IL1B stimulation.

It localises to the nucleus. Its subcellular location is the cytoplasm. It is found in the cytoskeleton. The protein resides in the spindle. In terms of biological role, contributes to the neddylation of all cullins by transferring NEDD8 from N-terminally acetylated NEDD8-conjugating E2s enzyme to different cullin C-terminal domain-RBX complexes which is necessary for the activation of cullin-RING E3 ubiquitin ligases (CRLs). May play a role in DNA damage response and may participate in cell proliferation and anchorage-independent cell growth. This Bos taurus (Bovine) protein is DCN1-like protein 5 (DCUN1D5).